The chain runs to 125 residues: MEAALNIASPSLPGVMPGQLEFTTSAAAKVSELIVEEGNPNLKLRLYVTGGGCSGFSYGFAFDDQTAEDDTLIVTEGVALVVDAMSLQYVLGARVDFEDGLEGSRFVIHNPNAQSTCGCGSSFSV.

Positions 53, 117, and 119 each coordinate iron-sulfur cluster.

It belongs to the HesB/IscA family. Homodimer. Iron-sulfur cluster is required as a cofactor.

Its function is as follows. Required for insertion of 4Fe-4S clusters. The protein is Putative iron-sulfur cluster insertion protein ErpA 2 of Polaromonas naphthalenivorans (strain CJ2).